The primary structure comprises 67 residues: Protein SlyX homolog (67 aa).

The protein belongs to the SlyX family.

The polypeptide is Protein SlyX homolog (Thiobacillus denitrificans (strain ATCC 25259 / T1)).